The primary structure comprises 279 residues: MKNFFSFSKLTPHLKNIYHRNMTYTTKQVGETGSLEYRLFFLKDNKPVSSFHDVPLWVNKEKQIVNMLVEIPRGTNAKLEIATKEYMNPIKQDVKDGKLRFVHDKYPFNYGALPQTWESPEHTHPSTGAKGDNDPLDACEIGSGQGVTGEFKQVKVLGVFAMIDAGETDWKILCIDVNDPIASQINSQEDIEKHLPGKINEVYTFLRDYKIPDGKGPNQFAFDGKLQSIDFSMKIIEETEAEWKDLVGGKTKSSLSVVNTTLNDSNTVTADVAAQKLNF.

Arg100 contributes to the diphosphate binding site. Asp132, Asp137, and Asp169 together coordinate Mg(2+).

It belongs to the PPase family. It depends on Mg(2+) as a cofactor.

It catalyses the reaction diphosphate + H2O = 2 phosphate + H(+). In Dictyostelium discoideum (Social amoeba), this protein is Inorganic pyrophosphatase (ppa1).